The chain runs to 445 residues: Competence protein E (445 aa).

Residues 1-23 (MKKYFLKCGYFLVCFCLPLIVFA) form the signal peptide.

This sequence belongs to the bacterial secretin family. PilQ subfamily.

The protein resides in the cell outer membrane. Functionally, involved in transformation (genetic competence for DNA uptake). This Haemophilus influenzae (strain ATCC 51907 / DSM 11121 / KW20 / Rd) protein is Competence protein E (comE).